We begin with the raw amino-acid sequence, 259 residues long: Putative zinc metalloprotease Rip2 (259 aa).

The next 2 membrane-spanning stretches (helical) occupy residues 14–34 and 39–59; these read PIFL…WLAG and PLAY…SLCL. A Zn(2+)-binding site is contributed by His-60. Residue Glu-61 is part of the active site. Residue His-64 coordinates Zn(2+). Helical transmembrane passes span 97-117, 128-148, 156-176, and 215-235; these read GLPM…AVYV, TLVS…LLAA, IHAV…TALV, and LVLF…YWLF.

The protein belongs to the peptidase M50B family. Zn(2+) serves as cofactor.

It is found in the cell membrane. This chain is Putative zinc metalloprotease Rip2 (rip2), found in Mycobacterium tuberculosis (strain ATCC 35801 / TMC 107 / Erdman).